Reading from the N-terminus, the 432-residue chain is Tol-Pal system protein TolB (432 aa).

The signal sequence occupies residues methionine 1–alanine 24.

The protein belongs to the TolB family. The Tol-Pal system is composed of five core proteins: the inner membrane proteins TolA, TolQ and TolR, the periplasmic protein TolB and the outer membrane protein Pal. They form a network linking the inner and outer membranes and the peptidoglycan layer.

Its subcellular location is the periplasm. Functionally, part of the Tol-Pal system, which plays a role in outer membrane invagination during cell division and is important for maintaining outer membrane integrity. The chain is Tol-Pal system protein TolB from Pasteurella multocida (strain Pm70).